The primary structure comprises 536 residues: MPNPFSRTPQSPSQASRKPSVVELLSSPPPLPSPDHDDVHSFSLSRHTSMSSVATGATGDRSRGSVSAGTTSGGVDWSDIKLSELTEPQKLISINSGYTVQEAFKTLVTHNLTSVPVSLSKTDSSDLENCLSFDYSDLNTYLLLLFGRARLDALSVDEINVEGSMSKLEYAQQMVNKAKHGGEVPVDFILRLHPKNPFIKFPEQETLYPAMEALGNGVHRVAITKDSSPHAPITGILSQRRLIKYMWENARRFPSLDFLINSTIQDLNIGSSNPLTIHGDQPLIDALQKMFTERVSSLAVIDRSRCLMGNISIVDVKHVSSSKNQDLLFKSVLNFISYNLSQKGIEAGQDQYPIFHVSNQSSLGRVIAKLVATQSHRLWVVESRQVKHHASSSGGFGSISGTRSGSISGASSAGPVEAALSPQSSSNNSAAAAAAAAASNPSTGSGSVSGSVSGTNSASGTGAGDSGLPGKLIGVVTLTDILGLFAESKYGKKIDPGLARRQRRRSSTSTRSSIDTTQGEIFRKSYTKQEGVFGKE.

Polar residues-rich tracts occupy residues 1-17 (MPNP…QASR) and 42-55 (FSLS…SVAT). A disordered region spans residues 1-72 (MPNPFSRTPQ…RGSVSAGTTS (72 aa)). CBS domains follow at residues 192-255 (LHPK…RFPS) and 267-327 (LNIG…NQDL). The segment covering 439–460 (SNPSTGSGSVSGSVSGTNSASG) has biased composition (low complexity). Disordered regions lie at residues 439-466 (SNPS…AGDS) and 496-536 (PGLA…FGKE).

It belongs to the SDS23 family.

It is found in the cytoplasm. The protein resides in the nucleus. Its function is as follows. Involved in DNA replication and cell separation. In Meyerozyma guilliermondii (strain ATCC 6260 / CBS 566 / DSM 6381 / JCM 1539 / NBRC 10279 / NRRL Y-324) (Yeast), this protein is Protein SDS23 (SDS23).